Here is a 105-residue protein sequence, read N- to C-terminus: Met repressor (105 aa).

Belongs to the MetJ family. As to quaternary structure, homodimer.

The protein localises to the cytoplasm. Functionally, this regulatory protein, when combined with SAM (S-adenosylmethionine) represses the expression of the methionine regulon and of enzymes involved in SAM synthesis. The sequence is that of Met repressor from Histophilus somni (strain 129Pt) (Haemophilus somnus).